The primary structure comprises 314 residues: Ribosomal protein L11 methyltransferase (314 aa).

4 residues coordinate S-adenosyl-L-methionine: threonine 161, glycine 182, aspartate 204, and asparagine 248.

It belongs to the methyltransferase superfamily. PrmA family.

Its subcellular location is the cytoplasm. It catalyses the reaction L-lysyl-[protein] + 3 S-adenosyl-L-methionine = N(6),N(6),N(6)-trimethyl-L-lysyl-[protein] + 3 S-adenosyl-L-homocysteine + 3 H(+). Its function is as follows. Methylates ribosomal protein L11. The sequence is that of Ribosomal protein L11 methyltransferase from Listeria monocytogenes serotype 4a (strain HCC23).